We begin with the raw amino-acid sequence, 495 residues long: MGRKKIQITRIMDERNRQVTFTKRKFGLMKKAYELSVLCDCEIALIIFNSSNKLFQYASTDMDKVLLKYTEYNEPHESRTNSDIVEALNKKEHRGCDSPDPDTSYVLTPHTEEKYKKINEEFDNMMRNHKIAPGLPPQNFSMSVTVPVTSPNALSYTNPGSSLVSPSLAASSTLAESSMLSPPPATLHRNVSPGAPQRPPSTGSAGGMLSTTDLTVPNGAGNGPVGNGFVDSRASPNLIGNTGANSVGKVMPTKSPPPPGGGSVGMNSRKPDLRVVIPPSSKGMMPPLNAQRISSSQATQPLATPVVSVTTPSLPPQGLVYSAMPTAYNTDYSLTSADLSALQGFTSPGMLSLGQASAWQQHHLGQAALSSLVAGGQLSQGSNLSINTNQNINIKTEPISPPRDRMTPSGFQQQQQQQPQQQPPPQPPQPQPQPRQEMGRSPVDSLSSSSSSYDGSDREDPRGDFHSPIVLGRPPNAEDRESPSVKRMRMDTWVT.

The MADS-box domain maps to 3-57 (RKKIQITRIMDERNRQVTFTKRKFGLMKKAYELSVLCDCEIALIIFNSSNKLFQY). Residues 58 to 86 (ASTDMDKVLLKYTEYNEPHESRTNSDIVE) constitute a DNA-binding region (mef2-type). The residue at position 59 (serine 59) is a Phosphoserine; by CK2. Serine 98 bears the Phosphoserine mark. The interval 175–225 (AESSMLSPPPATLHRNVSPGAPQRPPSTGSAGGMLSTTDLTVPNGAGNGPV) is disordered. Serine 235 carries the post-translational modification Phosphoserine. Residues 242–271 (TGANSVGKVMPTKSPPPPGGGSVGMNSRKP) form a disordered region. Lysine 249 bears the N6-acetyllysine mark. A Phosphoserine modification is found at serine 255. The segment at 266–283 (MNSRKPDLRVVIPPSSKG) is required for interaction with MAPKs. Threonine 304 and threonine 311 each carry phosphothreonine; by MAPK7 and MAPK14. Phosphoserine; by MAPK7 is present on serine 347. Residues 382–394 (SNLSINTNQNINI) are compositionally biased toward polar residues. The interval 382 to 495 (SNLSINTNQN…KRMRMDTWVT (114 aa)) is disordered. Lysine 395 is modified (N6-acetyllysine; alternate). Lysine 395 participates in a covalent cross-link: Glycyl lysine isopeptide (Lys-Gly) (interchain with G-Cter in SUMO); alternate. Serine 400 is modified (phosphoserine; by CDK5). The residue at position 407 (threonine 407) is a Phosphothreonine. The span at 421–433 (QQPPPQPPQPQPQ) shows a compositional bias: pro residues. Serine 441 carries the phosphoserine modification. The span at 441–454 (SPVDSLSSSSSSYD) shows a compositional bias: low complexity. 2 stretches are compositionally biased toward basic and acidic residues: residues 455–465 (GSDREDPRGDF) and 476–495 (NAED…TWVT).

As to quaternary structure, binds DNA as a homo- or heterodimer. Dimerizes with MEF2D. Interacts with HDAC7. Interacts with PIAS1; the interaction enhances sumoylation. Interacts with HDAC4, HDAC9 and SLC2A4RG. Interacts (via the N-terminal) with MAPK7; the interaction results in the phosphorylation and transcriptional activity of MEF2A. Post-translationally, constitutive phosphorylation on Ser-400 promotes Lys-395 sumoylation thus preventing acetylation at this site. Dephosphorylation on Ser-400 by PPP3CA upon neuron depolarization promotes a switch from sumoylation to acetylation on residue Lys-395 leading to inhibition of dendrite claw differentiation. Phosphorylation on Thr-304 and Thr-311 are the main sites involved in p38 MAPK signaling and activate transcription. Phosphorylated on these sites by MAPK14/p38alpha and MAPK11/p38beta, but not by MAPK13/p38delta nor by MAPK12/p38gamma. Phosphorylation on Ser-400 by CDK5 induced by neurotoxicity inhibits MEF2A transcriptional activation leading to apoptosis of cortical neurons. Phosphorylation on Thr-304, Thr-311 and Ser-347 can be induced by EGF. Sumoylation on Lys-395 is enhanced by PIAS1 and represses transcriptional activity. Phosphorylation on Ser-400 is required for sumoylation. Has no effect on nuclear location nor on DNA binding. Sumoylated with SUMO1 and, to a lesser extent with SUMO2 and SUMO3. PIASx facilitates sumoylation in postsynaptic dendrites in the cerebellar cortex and promotes their morphogenesis. In terms of processing, acetylation on Lys-395 activates transcriptional activity. Acetylated by p300 on several sites in diffentiating myocytes. Acetylation on Lys-4 increases DNA binding and transactivation. Hyperacetylation by p300 leads to enhanced cardiac myocyte growth and heart failure. Post-translationally, proteolytically cleaved in cerebellar granule neurons on several sites by caspase 3 and caspase 7 following neurotoxicity. Preferentially cleaves the CDK5-mediated hyperphosphorylated form which leads to neuron apoptosis and transcriptional inactivation.

The protein localises to the nucleus. In terms of biological role, transcriptional activator which binds specifically to the MEF2 element, 5'-YTA[AT](4)TAR-3', found in numerous muscle-specific genes. Also involved in the activation of numerous growth factor- and stress-induced genes. Mediates cellular functions not only in skeletal and cardiac muscle development, but also in neuronal differentiation and survival. Plays diverse roles in the control of cell growth, survival and apoptosis via p38 MAPK signaling in muscle-specific and/or growth factor-related transcription. In cerebellar granule neurons, phosphorylated and sumoylated MEF2A represses transcription of NUR77 promoting synaptic differentiation. Associates with chromatin to the ZNF16 promoter. This Rattus norvegicus (Rat) protein is Myocyte-specific enhancer factor 2A (Mef2a).